The primary structure comprises 103 residues: SLC35A4 upstream open reading frame protein (103 aa).

Residues 62-84 (ASAVLGFAVGTCTGIYAAQAYAV) traverse the membrane as a helical segment.

It localises to the mitochondrion inner membrane. In terms of biological role, required to maintain cellular respiration. The polypeptide is SLC35A4 upstream open reading frame protein (Homo sapiens (Human)).